A 176-amino-acid polypeptide reads, in one-letter code: ATP-dependent protease subunit HslV (176 aa).

Thr2 is a catalytic residue. Residues Gly157, Cys160, and Thr163 each contribute to the Na(+) site.

The protein belongs to the peptidase T1B family. HslV subfamily. A double ring-shaped homohexamer of HslV is capped on each side by a ring-shaped HslU homohexamer. The assembly of the HslU/HslV complex is dependent on binding of ATP.

The protein localises to the cytoplasm. The catalysed reaction is ATP-dependent cleavage of peptide bonds with broad specificity.. Allosterically activated by HslU binding. Its function is as follows. Protease subunit of a proteasome-like degradation complex believed to be a general protein degrading machinery. This Erwinia tasmaniensis (strain DSM 17950 / CFBP 7177 / CIP 109463 / NCPPB 4357 / Et1/99) protein is ATP-dependent protease subunit HslV.